The sequence spans 278 residues: 3-methyl-2-oxobutanoate hydroxymethyltransferase (278 aa).

2 residues coordinate Mg(2+): aspartate 43 and aspartate 82. 3-methyl-2-oxobutanoate-binding positions include 43–44 (DS), aspartate 82, and lysine 112. Mg(2+) is bound at residue glutamate 114. Glutamate 181 acts as the Proton acceptor in catalysis.

This sequence belongs to the PanB family. Homodecamer; pentamer of dimers. The cofactor is Mg(2+).

The protein localises to the cytoplasm. The enzyme catalyses 3-methyl-2-oxobutanoate + (6R)-5,10-methylene-5,6,7,8-tetrahydrofolate + H2O = 2-dehydropantoate + (6S)-5,6,7,8-tetrahydrofolate. It participates in cofactor biosynthesis; (R)-pantothenate biosynthesis; (R)-pantoate from 3-methyl-2-oxobutanoate: step 1/2. In terms of biological role, catalyzes the reversible reaction in which hydroxymethyl group from 5,10-methylenetetrahydrofolate is transferred onto alpha-ketoisovalerate to form ketopantoate. The chain is 3-methyl-2-oxobutanoate hydroxymethyltransferase from Bacillus cereus (strain ATCC 14579 / DSM 31 / CCUG 7414 / JCM 2152 / NBRC 15305 / NCIMB 9373 / NCTC 2599 / NRRL B-3711).